A 292-amino-acid polypeptide reads, in one-letter code: 2-(5''-triphosphoribosyl)-3'-dephosphocoenzyme-A synthase (292 aa).

This sequence belongs to the CitG/MdcB family.

It carries out the reaction 3'-dephospho-CoA + ATP = 2'-(5''-triphospho-alpha-D-ribosyl)-3'-dephospho-CoA + adenine. Functionally, catalyzes the formation of 2-(5''-triphosphoribosyl)-3'-dephosphocoenzyme-A, the precursor of the prosthetic group of the holo-acyl carrier protein (gamma chain) of citrate lyase, from ATP and dephospho-CoA. The chain is 2-(5''-triphosphoribosyl)-3'-dephosphocoenzyme-A synthase from Escherichia coli O7:K1 (strain IAI39 / ExPEC).